The primary structure comprises 89 residues: Small ribosomal subunit protein uS15 (89 aa).

It belongs to the universal ribosomal protein uS15 family. Part of the 30S ribosomal subunit. Forms a bridge to the 50S subunit in the 70S ribosome, contacting the 23S rRNA.

Functionally, one of the primary rRNA binding proteins, it binds directly to 16S rRNA where it helps nucleate assembly of the platform of the 30S subunit by binding and bridging several RNA helices of the 16S rRNA. In terms of biological role, forms an intersubunit bridge (bridge B4) with the 23S rRNA of the 50S subunit in the ribosome. This Oenococcus oeni (strain ATCC BAA-331 / PSU-1) protein is Small ribosomal subunit protein uS15.